The sequence spans 444 residues: Argininosuccinate synthase (444 aa).

Residues 18–26 and alanine 44 each bind ATP; that span reads AFSGGLDTS. Tyrosine 100 contributes to the L-citrulline binding site. Residues glycine 130 and threonine 132 each coordinate ATP. Residues threonine 132, asparagine 136, and aspartate 137 each coordinate L-aspartate. Asparagine 136 is an L-citrulline binding site. Aspartate 137 lines the ATP pocket. L-citrulline is bound by residues arginine 140 and serine 193. Residue aspartate 195 participates in ATP binding. L-citrulline is bound by residues threonine 202, glutamate 204, and glutamate 281.

Belongs to the argininosuccinate synthase family. Type 2 subfamily. In terms of assembly, homotetramer.

Its subcellular location is the cytoplasm. The enzyme catalyses L-citrulline + L-aspartate + ATP = 2-(N(omega)-L-arginino)succinate + AMP + diphosphate + H(+). It functions in the pathway amino-acid biosynthesis; L-arginine biosynthesis; L-arginine from L-ornithine and carbamoyl phosphate: step 2/3. In Haemophilus influenzae (strain PittEE), this protein is Argininosuccinate synthase.